We begin with the raw amino-acid sequence, 1125 residues long: Exportin-6 (1125 aa).

Alanine 2 carries the post-translational modification N-acetylalanine. One can recognise an Importin N-terminal domain in the interval 31-97; it reads IEELLNNFAQ…RSCLPKLLLA (67 aa). Serine 199 is subject to Phosphoserine. 2 positions are modified to phosphothreonine: threonine 201 and threonine 204. Residues serine 208 and serine 224 each carry the phosphoserine modification.

The protein belongs to the exportin family. As to quaternary structure, found in a complex with XPO6, Ran, ACTB and PFN1. Interacts with ACTB. Interacts with ACTB in a RanGTP-dependent manner.

It localises to the nucleus. The protein resides in the cytoplasm. Functionally, mediates the nuclear export of actin and profilin-actin complexes in somatic cells. This is Exportin-6 (Xpo6) from Mus musculus (Mouse).